The sequence spans 88 residues: Arminin 1b (88 aa).

The signal sequence occupies residues 1–18 (MKTVLAFLFLTFIAFTHA). The propeptide occupies 19 to 57 (ESYEDVKEEIKNEVEREIFEDLEEESDVLESNVRELNDA). Valine amide is present on Val85.

This sequence belongs to the arminin family. As to expression, expressed in entodermal epithelium along the body column.

The protein localises to the secreted. It localises to the target cell membrane. Antimicrobial peptide with a broad-spectrum antimicrobial activity. Keeps its antibacterial activity under a wide range of salt concentrations that mimic physiological conditions of human blood, which is surprising, since Hydra is an obligate freshwater animal with nearly no salt tolerance. Does not affect red blood cells. This Hydra vulgaris (Hydra) protein is Arminin 1b.